The following is a 307-amino-acid chain: Serine/threonine-protein phosphatase PP2A-1 catalytic subunit (307 aa).

Residues Asp-54, His-56, Asp-82, and Asn-114 each contribute to the Mn(2+) site. His-115 functions as the Proton donor in the catalytic mechanism. Mn(2+)-binding residues include His-164 and His-238. Residues 286–307 (FEPAPRRGAEGEVNRRTPDYFL) form a disordered region. A compositionally biased stretch (basic and acidic residues) spans 289-307 (APRRGAEGEVNRRTPDYFL).

It belongs to the PPP phosphatase family. PP-2A subfamily. The cofactor is Mn(2+).

The enzyme catalyses O-phospho-L-seryl-[protein] + H2O = L-seryl-[protein] + phosphate. The catalysed reaction is O-phospho-L-threonyl-[protein] + H2O = L-threonyl-[protein] + phosphate. In Acetabularia peniculus (Green alga), this protein is Serine/threonine-protein phosphatase PP2A-1 catalytic subunit.